The chain runs to 489 residues: Glycogen synthase (489 aa).

An ADP-alpha-D-glucose-binding site is contributed by Lys-15.

Belongs to the glycosyltransferase 1 family. Bacterial/plant glycogen synthase subfamily.

It carries out the reaction [(1-&gt;4)-alpha-D-glucosyl](n) + ADP-alpha-D-glucose = [(1-&gt;4)-alpha-D-glucosyl](n+1) + ADP + H(+). It functions in the pathway glycan biosynthesis; glycogen biosynthesis. In terms of biological role, synthesizes alpha-1,4-glucan chains using ADP-glucose. This chain is Glycogen synthase, found in Francisella tularensis subsp. holarctica (strain FTNF002-00 / FTA).